A 413-amino-acid polypeptide reads, in one-letter code: Alpha-1-antitrypsin 1-1 (413 aa).

Residues 1 to 24 (MTPSISWGLLLLAGLCCLVPSFLA) form the signal peptide. N-linked (GlcNAc...) asparagine glycosylation is found at Asn-64, Asn-101, and Asn-265. The tract at residues 368-387 (AVTVLQMVPMSMPPILRFDH) is RCL.

This sequence belongs to the serpin family.

The protein resides in the secreted. Its function is as follows. Inhibitor of serine proteases. Its primary target is elastase, but it also has a moderate affinity for plasmin and thrombin. The sequence is that of Alpha-1-antitrypsin 1-1 (Serpina1a) from Mus musculus (Mouse).